The primary structure comprises 669 residues: DNA ligase (669 aa).

NAD(+) is bound by residues 35-39 (DSEYD), 84-85 (SL), and Glu114. The N6-AMP-lysine intermediate role is filled by Lys116. Positions 137, 171, 287, and 311 each coordinate NAD(+). Zn(2+)-binding residues include Cys405, Cys408, Cys423, and Cys428. Residues 591–669 (DSDSYFAGKT…EAQLLGELKK (79 aa)) enclose the BRCT domain.

It belongs to the NAD-dependent DNA ligase family. LigA subfamily. The cofactor is Mg(2+). Mn(2+) serves as cofactor.

It carries out the reaction NAD(+) + (deoxyribonucleotide)n-3'-hydroxyl + 5'-phospho-(deoxyribonucleotide)m = (deoxyribonucleotide)n+m + AMP + beta-nicotinamide D-nucleotide.. DNA ligase that catalyzes the formation of phosphodiester linkages between 5'-phosphoryl and 3'-hydroxyl groups in double-stranded DNA using NAD as a coenzyme and as the energy source for the reaction. It is essential for DNA replication and repair of damaged DNA. The chain is DNA ligase from Bacillus velezensis (strain DSM 23117 / BGSC 10A6 / LMG 26770 / FZB42) (Bacillus amyloliquefaciens subsp. plantarum).